The chain runs to 257 residues: Deoxyribose-phosphate aldolase (257 aa).

Residue aspartate 102 is the Proton donor/acceptor of the active site. The active-site Schiff-base intermediate with acetaldehyde is the lysine 166. The active-site Proton donor/acceptor is the lysine 198.

Belongs to the DeoC/FbaB aldolase family. DeoC type 2 subfamily.

It localises to the cytoplasm. It carries out the reaction 2-deoxy-D-ribose 5-phosphate = D-glyceraldehyde 3-phosphate + acetaldehyde. The protein operates within carbohydrate degradation; 2-deoxy-D-ribose 1-phosphate degradation; D-glyceraldehyde 3-phosphate and acetaldehyde from 2-deoxy-alpha-D-ribose 1-phosphate: step 2/2. Catalyzes a reversible aldol reaction between acetaldehyde and D-glyceraldehyde 3-phosphate to generate 2-deoxy-D-ribose 5-phosphate. The sequence is that of Deoxyribose-phosphate aldolase from Shewanella frigidimarina (strain NCIMB 400).